Here is a 339-residue protein sequence, read N- to C-terminus: Ketol-acid reductoisomerase (NADP(+)) (339 aa).

The KARI N-terminal Rossmann domain occupies 1-182 (MRVYYDRDAD…GGGRSGIIET (182 aa)). Residues 24–27 (YGSQ), Arg48, Ser51, Thr53, and 83–86 (DEHQ) each bind NADP(+). The active site involves His108. NADP(+) is bound at residue Gly134. The KARI C-terminal knotted domain occupies 183–328 (NFREECETDL…ARLRGMMPWI (146 aa)). Positions 191, 195, 227, and 231 each coordinate Mg(2+). Ser252 contributes to the substrate binding site.

This sequence belongs to the ketol-acid reductoisomerase family. The cofactor is Mg(2+).

It carries out the reaction (2R)-2,3-dihydroxy-3-methylbutanoate + NADP(+) = (2S)-2-acetolactate + NADPH + H(+). The catalysed reaction is (2R,3R)-2,3-dihydroxy-3-methylpentanoate + NADP(+) = (S)-2-ethyl-2-hydroxy-3-oxobutanoate + NADPH + H(+). The protein operates within amino-acid biosynthesis; L-isoleucine biosynthesis; L-isoleucine from 2-oxobutanoate: step 2/4. It functions in the pathway amino-acid biosynthesis; L-valine biosynthesis; L-valine from pyruvate: step 2/4. In terms of biological role, involved in the biosynthesis of branched-chain amino acids (BCAA). Catalyzes an alkyl-migration followed by a ketol-acid reduction of (S)-2-acetolactate (S2AL) to yield (R)-2,3-dihydroxy-isovalerate. In the isomerase reaction, S2AL is rearranged via a Mg-dependent methyl migration to produce 3-hydroxy-3-methyl-2-ketobutyrate (HMKB). In the reductase reaction, this 2-ketoacid undergoes a metal-dependent reduction by NADPH to yield (R)-2,3-dihydroxy-isovalerate. This chain is Ketol-acid reductoisomerase (NADP(+)), found in Caulobacter sp. (strain K31).